The chain runs to 438 residues: Serine hydroxymethyltransferase (438 aa).

(6S)-5,6,7,8-tetrahydrofolate is bound by residues Leu-119 and 123-125 (GHL). Position 228 is an N6-(pyridoxal phosphate)lysine (Lys-228). 370 to 372 (SPF) contacts (6S)-5,6,7,8-tetrahydrofolate.

It belongs to the SHMT family. Homodimer. The cofactor is pyridoxal 5'-phosphate.

It localises to the cytoplasm. The catalysed reaction is (6R)-5,10-methylene-5,6,7,8-tetrahydrofolate + glycine + H2O = (6S)-5,6,7,8-tetrahydrofolate + L-serine. It participates in one-carbon metabolism; tetrahydrofolate interconversion. The protein operates within amino-acid biosynthesis; glycine biosynthesis; glycine from L-serine: step 1/1. In terms of biological role, catalyzes the reversible interconversion of serine and glycine with tetrahydrofolate (THF) serving as the one-carbon carrier. This reaction serves as the major source of one-carbon groups required for the biosynthesis of purines, thymidylate, methionine, and other important biomolecules. Also exhibits THF-independent aldolase activity toward beta-hydroxyamino acids, producing glycine and aldehydes, via a retro-aldol mechanism. This Pelodictyon phaeoclathratiforme (strain DSM 5477 / BU-1) protein is Serine hydroxymethyltransferase.